A 203-amino-acid polypeptide reads, in one-letter code: Peptidyl-tRNA hydrolase (203 aa).

Tyrosine 14 is a tRNA binding site. Catalysis depends on histidine 19, which acts as the Proton acceptor. TRNA-binding residues include tyrosine 64, asparagine 66, and asparagine 112.

Belongs to the PTH family. As to quaternary structure, monomer.

It is found in the cytoplasm. It carries out the reaction an N-acyl-L-alpha-aminoacyl-tRNA + H2O = an N-acyl-L-amino acid + a tRNA + H(+). Functionally, hydrolyzes ribosome-free peptidyl-tRNAs (with 1 or more amino acids incorporated), which drop off the ribosome during protein synthesis, or as a result of ribosome stalling. In terms of biological role, catalyzes the release of premature peptidyl moieties from peptidyl-tRNA molecules trapped in stalled 50S ribosomal subunits, and thus maintains levels of free tRNAs and 50S ribosomes. This chain is Peptidyl-tRNA hydrolase, found in Methylobacterium nodulans (strain LMG 21967 / CNCM I-2342 / ORS 2060).